Here is a 667-residue protein sequence, read N- to C-terminus: Holliday junction recognition protein (667 aa).

The interval 78 to 126 is disordered; the sequence is LNGQAPEGDSESSGADTSLEENWPSCSSAMREASGDPRQRQPAVPGNTL. Phosphoserine occurs at positions 169, 185, and 195. Disordered stretches follow at residues 181–201 and 279–317; these read ISAK…GQGP and RRRP…EPGK. Residues 279–297 are compositionally biased toward basic residues; the sequence is RRRPSRKQGLHKNRTHCPR. Residues serine 388, serine 424, serine 449, and serine 462 each carry the phosphoserine modification. Residues 443-530 form a disordered region; the sequence is YRSGSKSPGS…NSEPTGKAVW (88 aa). Positions 466 to 482 are enriched in basic and acidic residues; sequence GREKTERPGEALEDLRG. A compositionally biased stretch (low complexity) spans 496–515; it reads SCPSPEGSPSRSPSHSQLSS. Residue lysine 554 forms a Glycyl lysine isopeptide (Lys-Gly) (interchain with G-Cter in SUMO2) linkage. Serine 567 bears the Phosphoserine mark. The tract at residues 596-617 is disordered; sequence KRLNPDSPQQSSQKRSISPGCH. Residues 601–611 show a composition bias toward polar residues; sequence DSPQQSSQKRS. A Phosphoserine modification is found at serine 613.

In terms of assembly, interacts with CENPA (via CATD domain); the interaction is direct and specific for CENPA since it does not interact with H3.1- or H3.3-containing nucleosomes. Heterotrimer composed of HJURP, CENPA and histone H4, where HJURP interacts with the dimer formed by CENPA and histone H4 and prevents tetramerization of CENPA and H4. Identified in a centromere complex containing histones H2A, H2B and H4, and at least CENPA, CENPB, CENPC, CENPT, CENPN, HJURP, SUPT16H, SSRP1 and RSF1. Interacts with 14-3-3 family members in a phosphorylation-dependent manner. Interacts with MSH5 and NBN.

Its subcellular location is the nucleus. The protein localises to the nucleolus. The protein resides in the chromosome. It is found in the centromere. Functionally, centromeric protein that plays a central role in the incorporation and maintenance of histone H3-like variant CENPA at centromeres. Acts as a specific chaperone for CENPA and is required for the incorporation of newly synthesized CENPA molecules into nucleosomes at replicated centromeres. Prevents CENPA-H4 tetramerization and prevents premature DNA binding by the CENPA-H4 tetramer. Directly binds Holliday junctions. The sequence is that of Holliday junction recognition protein (Hjurp) from Mus musculus (Mouse).